Consider the following 498-residue polypeptide: Probable malate:quinone oxidoreductase (498 aa).

This sequence belongs to the MQO family. FAD is required as a cofactor.

The enzyme catalyses (S)-malate + a quinone = a quinol + oxaloacetate. It functions in the pathway carbohydrate metabolism; tricarboxylic acid cycle; oxaloacetate from (S)-malate (quinone route): step 1/1. The protein is Probable malate:quinone oxidoreductase of Prochlorococcus marinus (strain MIT 9301).